Here is a 210-residue protein sequence, read N- to C-terminus: Large ribosomal subunit protein uL4 (210 aa).

Residues 46–85 are disordered; the sequence is QGTASTLTRSEVRGGGRKPYKQKGTGRARQGSIRTPLRPG. Basic residues predominate over residues 60 to 71; that stretch reads GGRKPYKQKGTG.

This sequence belongs to the universal ribosomal protein uL4 family. Part of the 50S ribosomal subunit.

In terms of biological role, one of the primary rRNA binding proteins, this protein initially binds near the 5'-end of the 23S rRNA. It is important during the early stages of 50S assembly. It makes multiple contacts with different domains of the 23S rRNA in the assembled 50S subunit and ribosome. Forms part of the polypeptide exit tunnel. In Prochlorococcus marinus (strain AS9601), this protein is Large ribosomal subunit protein uL4.